Reading from the N-terminus, the 287-residue chain is Urease accessory protein UreD (287 aa).

Belongs to the UreD family. In terms of assembly, ureD, UreF and UreG form a complex that acts as a GTP-hydrolysis-dependent molecular chaperone, activating the urease apoprotein by helping to assemble the nickel containing metallocenter of UreC. The UreE protein probably delivers the nickel.

It is found in the cytoplasm. Its function is as follows. Required for maturation of urease via the functional incorporation of the urease nickel metallocenter. In Aliivibrio fischeri (strain MJ11) (Vibrio fischeri), this protein is Urease accessory protein UreD.